Here is an 881-residue protein sequence, read N- to C-terminus: Envelope glycoprotein gp160 (881 aa).

Residues methionine 1 to glycine 19 form the signal peptide. Residues isoleucine 20 to glycine 696 lie on the Extracellular side of the membrane. Asparagine 37 carries N-linked (GlcNAc...) asparagine; by host glycosylation. A disulfide bond links cysteine 44 and cysteine 57. N-linked (GlcNAc...) asparagine; by host glycosylation is found at asparagine 70, asparagine 114, asparagine 148, asparagine 158, asparagine 186, asparagine 200, asparagine 204, asparagine 214, asparagine 246, asparagine 249, asparagine 280, asparagine 286, asparagine 297, asparagine 308, asparagine 318, asparagine 373, and asparagine 379. Cystine bridges form between cysteine 101-cysteine 222, cysteine 108-cysteine 213, cysteine 113-cysteine 170, cysteine 235-cysteine 265, and cysteine 245-cysteine 257. The segment at cysteine 113–serine 169 is V1. The segment at cysteine 170–cysteine 213 is V2. The V3 stretch occupies residues cysteine 313 to tryptophan 345. The cysteines at positions 313 and 346 are disulfide-linked. 2 disulfides stabilise this stretch: cysteine 397–cysteine 461 and cysteine 404–cysteine 434. Residues cysteine 404 to cysteine 434 form a V4 region. Asparagine 462 and asparagine 478 each carry an N-linked (GlcNAc...) asparagine; by host glycan. Residues glycine 477–methionine 484 form a V5 region. Residues glycine 528–alanine 548 are fusion peptide. Positions leucine 591–glutamine 607 are immunosuppression. Residues asparagine 627, asparagine 636, and asparagine 652 are each glycosylated (N-linked (GlcNAc...) asparagine; by host). Positions asparagine 636–methionine 668 form a coiled coil. Residues lysine 673 to glutamine 694 are MPER; binding to GalCer. The helical transmembrane segment at isoleucine 697–alanine 717 threads the bilayer. Topologically, residues lysine 718–leucine 881 are cytoplasmic. Residues tyrosine 723–valine 726 carry the YXXV motif; contains endocytosis signal motif. The tract at residues threonine 737–asparagine 761 is disordered. Residue cysteine 789 is the site of S-palmitoyl cysteine; by host attachment. A Di-leucine internalization motif motif is present at residues leucine 880 to leucine 881.

The mature envelope protein (Env) consists of a homotrimer of non-covalently associated gp120-gp41 heterodimers. The resulting complex protrudes from the virus surface as a spike. Interacts with host CD4 and CCR5. Gp120 also interacts with the C-type lectins CD209/DC-SIGN and CLEC4M/DC-SIGNR (collectively referred to as DC-SIGN(R)). As to quaternary structure, the mature envelope protein (Env) consists of a homotrimer of non-covalently associated gp120-gp41 heterodimers. The resulting complex protrudes from the virus surface as a spike. Specific enzymatic cleavages in vivo yield mature proteins. Envelope glycoproteins are synthesized as an inactive precursor that is heavily N-glycosylated and processed likely by host cell furin in the Golgi to yield the mature SU and TM proteins. The cleavage site between SU and TM requires the minimal sequence [KR]-X-[KR]-R. In terms of processing, palmitoylation of the transmembrane protein and of Env polyprotein (prior to its proteolytic cleavage) is essential for their association with host cell membrane lipid rafts. Palmitoylation is therefore required for envelope trafficking to classical lipid rafts, but not for viral replication.

It localises to the virion membrane. The protein resides in the host cell membrane. Its subcellular location is the host endosome membrane. Functionally, the surface protein gp120 (SU) attaches the virus to the host lymphoid cell by binding to the primary receptor CD4. This interaction induces a structural rearrangement creating a high affinity binding site for a chemokine coreceptor like CCR5. This peculiar 2 stage receptor-interaction strategy allows gp120 to maintain the highly conserved coreceptor-binding site in a cryptic conformation, protected from neutralizing antibodies. These changes are transmitted to the transmembrane protein gp41 and are thought to activate its fusogenic potential by unmasking its fusion peptide. In terms of biological role, surface protein gp120 (SU) may target the virus to gut-associated lymphoid tissue (GALT) by binding host ITGA4/ITGB7 (alpha-4/beta-7 integrins), a complex that mediates T-cell migration to the GALT. Interaction between gp120 and ITGA4/ITGB7 would allow the virus to enter GALT early in the infection, infecting and killing most of GALT's resting CD4+ T-cells. This T-cell depletion is believed to be the major insult to the host immune system leading to AIDS. The surface protein gp120 is a ligand for CD209/DC-SIGN and CLEC4M/DC-SIGNR, which are respectively found on dendritic cells (DCs), and on endothelial cells of liver sinusoids and lymph node sinuses. These interactions allow capture of viral particles at mucosal surfaces by these cells and subsequent transmission to permissive cells. DCs are professional antigen presenting cells, critical for host immunity by inducing specific immune responses against a broad variety of pathogens. They act as sentinels in various tissues where they take up antigen, process it, and present it to T-cells following migration to lymphoid organs. SIV subverts the migration properties of dendritic cells to gain access to CD4+ T-cells in lymph nodes. Virus transmission to permissive T-cells occurs either in trans (without DCs infection, through viral capture and transmission), or in cis (following DCs productive infection, through the usual CD4-gp120 interaction), thereby inducing a robust infection. In trans infection, bound virions remain infectious over days and it is proposed that they are not degraded, but protected in non-lysosomal acidic organelles within the DCs close to the cell membrane thus contributing to the viral infectious potential during DCs' migration from the periphery to the lymphoid tissues. On arrival at lymphoid tissues, intact virions recycle back to DCs' cell surface allowing virus transmission to CD4+ T-cells. Virion capture also seems to lead to MHC-II-restricted viral antigen presentation, and probably to the activation of SIV-specific CD4+ cells. Its function is as follows. The transmembrane protein gp41 (TM) acts as a class I viral fusion protein. Under the current model, the protein has at least 3 conformational states: pre-fusion native state, pre-hairpin intermediate state, and post-fusion hairpin state. During fusion of viral and target intracellular membranes, the coiled coil regions (heptad repeats) assume a trimer-of-hairpins structure, positioning the fusion peptide in close proximity to the C-terminal region of the ectodomain. The formation of this structure appears to drive apposition and subsequent fusion of viral and target cell membranes. Complete fusion occurs in host cell endosomes. The virus undergoes clathrin-dependent internalization long before endosomal fusion, thus minimizing the surface exposure of conserved viral epitopes during fusion and reducing the efficacy of inhibitors targeting these epitopes. Membranes fusion leads to delivery of the nucleocapsid into the cytoplasm. Functionally, the envelope glycoprotein gp160 precursor down-modulates cell surface CD4 antigen by interacting with it in the endoplasmic reticulum and blocking its transport to the cell surface. In terms of biological role, the gp120-gp41 heterodimer allows rapid transcytosis of the virus through CD4 negative cells such as simple epithelial monolayers of the intestinal, rectal and endocervical epithelial barriers. Both gp120 and gp41 specifically recognize glycosphingolipids galactosyl-ceramide (GalCer) or 3' sulfo-galactosyl-ceramide (GalS) present in the lipid rafts structures of epithelial cells. Binding to these alternative receptors allows the rapid transcytosis of the virus through the epithelial cells. This transcytotic vesicle-mediated transport of virions from the apical side to the basolateral side of the epithelial cells does not involve infection of the cells themselves. The chain is Envelope glycoprotein gp160 (env) from Cercopithecidae (Old World monkeys).